A 4776-amino-acid chain; its full sequence is MTETVEDKVSHSITGLDILKGIVAAGAVISGTVATQTKVFTNESAVLEKTVEKTDALATNDTVVLGTISTSNSASSTSLSASESASTSASESASTSASTSASTSASESASTSASTSISASSTVVGSQTAAATEATAKKVEEDRKKPASDYVASVTNVNLQSYAKRRKRSVDSIEQLLASIKNAAVFSGNTIVNGAPAINASLNIAKSETKVYTGEGVDSVYRVPIYYKLKVTNDGSKLTFTYTVTYVNPKTNDLGNISSMRPGYSIYNSGTSTQTMLTLGSDLGKPSGVKNYITDKNGRQVLSYNTSTMTTQGSGYTWGNGAQMNGFFAKKGYGLTSSWTVPITGTDTSFTFTPYAARTDRIGINYFNGGGKVVESSTTSQSLSQSKSLSVSASQSASASASTSASASASTSASASASTSASASASTSASVSASTSASASASTSASASASTSASESASTSASASASTSASASASTSASASASTSASESASTSASASASTSASESASTSASASASTSASASASTSASGSASTSTSASASTSASASASTSASASASISASESASTSASESASTSTSASASTSASESASTSASASASTSASASASTSASASASTSASASTSASESASTSASASASTSASASASTSASASASTSASASASTSASVSASTSASASASTSASASASTSASESASTSASASASTSASASASTSASASASTSASASASTSASASASTSASESASTSASASASTSASASASTSASASASTSASASASTSASASASISASESASTSASASASTSASASASTSASASASTSASESASTSASASASTSASASASTSASASASTSASASASTSASASASTSASASASTSASESASTSASASASTSASESASTSASASASTSASASASTSASASASTSASASASTSASASASTSASASASTSASASTSASESASTSASASASTSASASASTSASASASTSASESASTSASASASTSASASASTSASASASTSASASASTSASASASISASESASTSASASASTSASVSASTSASASASTSASESASTSASASASTSASESASTSASASASTSASASASISASESASTSASASASTSASASASTSASASASTSASESASTSTSASASTSASESASTSASASASTSASASASTSASASASTSASASASTSASASTSASESASTSASASASTSASASASTSASASASTSASASASTSASASASTSASASASTSASASASTSASASASTSASESASTSASASASTSASASASTSASASASTSASASASTSASVSASTSASESASTSASASASTSASASASTSASESASTSASASASTSASESASTSASASASTSASASASTSASASASTSASASASTSASASASTSASASASTSASASASTSASASASTSASASASTSASASASTSASASASTSASASASTSASASASISASESASTSASASASTSASASASTSASVSASTSASASASTSASASASISASESASTSASASASTSASASASTSASASASTSASASASISASESASTSASASASTSASASASTSASASASTSASASASTSASASASTSASASASTSASASASTSASASASTSASASASTSASESASTSASASASTSASASASTSASASASTSASVSASTSASESASTSASASASTSASASASTSASASASTSASESASTSASASASTSASASASTSASESASTSASASASTSASASASTSASASASTSASASASASTSASASASTSASASASTSASASASISASESASTSASESASTSTSASASTSASESASTSASASASTSASASASTSASASASTSASASTSASESASTSASASASTSASASASTSASASASTSASASASTSASASASTSASVSASTSASASASTSASASASTSASESASTSASASASTSASASASTSASASASTSASASASTSASASASTSASESASTSASASASTSASASASTSASASASTSASASASTSASASASISASESASTSASASASTSASASASTSASASASTSASESASTSASASASTSASASASTSASASASTSASASASTSASASASTSASASASTSASESASTSASASASTSASESASTSASASASTSASASASTSASASASTSASASASTSASASASTSASASASTSASASTSASESASTSASASASTSASASASTSASASASTSASESASTSASASASTSASASASTSASASASTSASASASTSASASASISASESASTSASASASTSASVSASTSASASASTSASESASTSASASASTSASESASTSASASASTSASASASISASESASTSASASASTSASASASTSASASASTSASESASTSTSASASTSASESASTSASASASTSASASASTSASASASTSASASASTSASASTSASESASTSASASASTSASASASTSASASASTSASASASTSASASASTSASASASTSASASASTSASASASTSASASASTSASASASTSASASASTSASESASTSASASASTSASASASTSASASASTSASVSASTSASESASTSASASASTSASASASTSASASASTSASESASTSASASASTSASASASTSASESASTSASASASTSASASASTSASASASTSASASASASTSASASASTSASASASTSASASASISASESASTSASASASASTSASASASTSASASASTSASASASISASESASTSASESASTSTSASASTSASESASTSASASASTSASASASTSASASASTSASASTSASESASTSASASASTSASASASTSASASASTSASASASTSASASASTSASVSASTSASASASTSASASASTSASESASTSASASTSASESASTSASASASTSASASASTSASASASTSASESASTSASASASTSASASASTSASESASTSASASASTSASASASTSASASASTSASESASTSASASASTSASESASTSASASASTSASASASTSASGSASTSTSASASTSASASASTSASASASISASESASTSASESASTSTSASASTSASESASTSASASASTSASASASTSASASASTSASASTSASESASTSASASASTSASASASTSASASASTSASASASTSASVSASTSASASASTSASASASTSASESASTSASASASTSASASASTSASASASTSASASASTSASASASTSASESASTSASASASTSASASASTSASASASTSASASASTSASASASISASESASTSASASASTSASASASTSASASASTSASESASTSASASASTSASASASTSASASASTSASASASTSASASASTSASASASTSASESASTSASASASTSASESASTSASASASTSASASASTSASASASTSASASASTSASASASTSASASASTSASASTSASESASTSASASASTSASASASTSASASASTSASESASTSASASASTSASASASTSASASASTSASASASTSASASASISASESASTSASASASTSASVSASTSASASASTSASESASTSASASASTSASESASTSASASASTSASASASISASESASTSASASASTSASASASTSASASASTSASESASTSTSASASTSASESASTSASASASTSASASASTSASASASTSASASASTSASASTSASESASTSASASASTSASASASTSASASASTSASASASTSASASASTSASASASTSASASASTSASASASTSASESASTSASASASTSASASASTSASASASTSASASASTSASVSASTSASESASTSASASASTSASASASTSASESASTSASASASTSASESASTSASASASTSASASASTSASASASTSASASASTSASASASTSASASASTSASASASTSASASASTSASASASTSASASASTSASASASTSASASASTSASASASISASESASTSASASASTSASASASTSASVSASTSASASASTSASASASISASESASTSASASASTSASASASTSASASASTSASASASISASESASTSASASASTSASASASTSASASASTSASASASTSASASASTSASASASTSASASASTSASASASTSASASASTSASESASTSASASASTSASASASISASESASTSASASASTSASASASTSASASASTSASESASTSTSASASTSASESASTSASASASTSASASASTSASASASTSASASASTSASASTSASESASTSASASASTSASASASTSASASASTSASASASTSASASASTSASASASTSASASASTSASASASTSASESASTSASASASTSASASASTSASASASTSASASASTSASVSASTSASESASTSASASASTSASASASTSASESASTSASASASTSASESASTSASASASTSASASASTSASASASTSASASASTSASASASTSASASASTSASASASTSASASASTSASASASTSASASASTSASASASTSASASASTSASASASISASESASTSASASASTSASASASTSASVSASTSASASASTSASASASISASESASTSASASASTSASASASTSASASASTSASASASISASESASTSASASASTSASASASTSASASASTSASASASTSASASASTSASASASTSASASASTSASASASTSASASASTSASASASTSASASASTSASASASTSASASASTSASASASTSVSNSANHSNSQVGNTSGSTGKSQKELPNTGTESSIGSVLLGVLAAVTGIGLVAKRRKRDEEE.

The signal sequence occupies residues Met1–Asn72. 13 O-linked (GlcNAc...) serine glycosylation sites follow: Ser73, Ser75, Ser76, Ser78, Ser80, Ser82, Ser94, Ser100, Ser108, Ser110, Ser118, Ser120, and Ser121. The tract at residues Ser73–Ser121 is serine-rich repeat region 1, SRR1. A disordered region spans residues Ser86–Ser112. A self aggregating domain region spans residues Thr122–Arg166. The tract at residues Thr122 to Ser394 is basic region, BR. The short motif at Lys164 to Arg168 is the Host furin cleavage recognition element. The keratin 10-binding domain, cell-type specific binding to lung-derived cells stretch occupies residues Thr273–Val341. Residues Gln395–Ser4712 are serine-rich repeat region 2, SRR2. 27 disordered regions span residues Ala481–Ala627, Ala861–Thr889, Ala925–Ala965, Ser1052–Ala1085, Ala1123–Ala1153, Ala1171–Ala1199, Ala1311–Thr1357, Ala1671–Ala1731, Ser1792–Ala1863, Ala2105–Thr2133, Ala2169–Ala2209, Ser2296–Ala2329, Ala2367–Ala2397, Ala2415–Ala2443, Ala2571–Ala2631, Glu2737–Ala2805, Ala2855–Ala3113, Ala3347–Thr3375, Ala3411–Ala3451, Ser3538–Ala3571, Ala3609–Ala3639, Ala3657–Ala3685, Ala3797–Thr3843, Ala4167–Ala4197, Ala4215–Ala4243, Ala4355–Thr4401, and Ser4706–Ser4747. Residues Val4715–Ser4747 are compositionally biased toward polar residues. The LPXTG sorting signal motif lies at Leu4740 to Gly4744. Pentaglycyl murein peptidoglycan amidated threonine is present on Thr4743. Residues Gly4744–Glu4776 constitute a propeptide, removed by sortase.

Belongs to the serine-rich repeat protein (SRRP) family. Binds to human and mouse protein keratin 10 (KRT10). Post-translationally, glycosylated. Only truncated substrates greater than 25 residues long are glycosylated by the Gtf1-Gtf2 complex in vitro; only Ser residues have been seen to be glycosylated. Based on electrophoretic mobility it is probable that most of the Ser residues in SSR1 and SSR2 are O-GlcNAcylated. Subsequent glycosylation by up to 7 sugar transferases (Gtf3 and GlyAT, GlyB, GlyD, GlyE, GlyF and GlyG) is able to generate very high sugar polymorphism. In terms of processing, can be cleaved by human furin protease; this fragment contributes to self-aggregation and possibly biofilm formation in vitro.

It is found in the secreted. The protein localises to the cell wall. It localises to the cell surface. In terms of biological role, protein that allows bacteria to adhere to mammalian host cells. Required for full virulence in mouse infection models when infected intranasally. Required for adhesion to host cells in vitro and for persistence in the lower respiratory tract. Binds host keratin 10 (KRT10) on lung cells which mediates adhesion via the C-terminus of the basic region (BR, residues 273-341); glycosylation of either protein is not required for the interaction. A region in the N-terminus (residues 122-166) self aggregates, contributing to mature biofilm formation. The basic region (BR, residues 187-385) also self aggregates; the BR binds DNA which enhances self aggregation. This Streptococcus pneumoniae serotype 4 (strain ATCC BAA-334 / TIGR4) protein is Pneumococcal serine-rich repeat protein.